The primary structure comprises 261 residues: Phosphonates import ATP-binding protein PhnC (261 aa).

The region spanning isoleucine 9 to asparagine 253 is the ABC transporter domain. An ATP-binding site is contributed by glycine 42–serine 49.

This sequence belongs to the ABC transporter superfamily. Phosphonates importer (TC 3.A.1.9.1) family. As to quaternary structure, the complex is composed of two ATP-binding proteins (PhnC), two transmembrane proteins (PhnE) and a solute-binding protein (PhnD).

It localises to the cell membrane. The enzyme catalyses phosphonate(out) + ATP + H2O = phosphonate(in) + ADP + phosphate + H(+). Functionally, part of the ABC transporter complex PhnCDE involved in phosphonates import. Responsible for energy coupling to the transport system. The polypeptide is Phosphonates import ATP-binding protein PhnC (Lactobacillus gasseri (strain ATCC 33323 / DSM 20243 / BCRC 14619 / CIP 102991 / JCM 1131 / KCTC 3163 / NCIMB 11718 / NCTC 13722 / AM63)).